Here is a 56-residue protein sequence, read N- to C-terminus: AGLYKPPNNIESENEVYTGNICFLPLEVGVCRALFFRYGYDPAIKACXEFMYGGCQ.

The BPTI/Kunitz inhibitor domain occupies 22 to 56 (CFLPLEVGVCRALFFRYGYDPAIKACXEFMYGGCQ). Residues Cys-31 and Cys-55 are joined by a disulfide bond.

Inhibits trypsin. The sequence is that of Hemolymph trypsin inhibitor A from Manduca sexta (Tobacco hawkmoth).